We begin with the raw amino-acid sequence, 484 residues long: Cobyric acid synthase (484 aa).

Residues 248–435 (VLKVIVPVLP…LHGLFEGSQS (188 aa)) enclose the GATase cobBQ-type domain. The active-site Nucleophile is cysteine 329. Residue histidine 427 is part of the active site.

This sequence belongs to the CobB/CobQ family. CobQ subfamily.

The protein operates within cofactor biosynthesis; adenosylcobalamin biosynthesis. Catalyzes amidations at positions B, D, E, and G on adenosylcobyrinic A,C-diamide. NH(2) groups are provided by glutamine, and one molecule of ATP is hydrogenolyzed for each amidation. The polypeptide is Cobyric acid synthase (Pseudomonas putida (strain W619)).